The sequence spans 505 residues: OVARIAN TUMOR DOMAIN-containing deubiquitinating enzyme 6 (505 aa).

Residues 1 to 191 form a disordered region; that stretch reads MTRILVQRGS…NSSDEHMPCY (191 aa). A compositionally biased stretch (low complexity) spans 9-30; it reads GSSGSSSNSSRPSSSSSSSSGS. A compositionally biased stretch (basic and acidic residues) spans 51 to 72; it reads DEKQEEVTVVEKAECSDAKDVA. The span at 73-86 shows a compositional bias: acidic residues; the sequence is VDSDEPADREDDEG. Residues 115 to 124 are compositionally biased toward pro residues; sequence PPVPAPPPKP. Residues 159-173 show a composition bias toward low complexity; that stretch reads SSRSSPTGSHPSSPR. A compositionally biased stretch (basic and acidic residues) spans 174-188; that stretch reads SHSENEGYNSSDEHM. Residues 216-339 form the OTU domain; that stretch reads FEIRRMLEDG…GNHYNSLVDP (124 aa). Residue D224 is part of the active site. The active-site Nucleophile is C227. The active site involves H332. The disordered stretch occupies residues 416–447; the sequence is RIGPKESSTSNAETSSSGARPSGSDSKPAEAV. A compositionally biased stretch (low complexity) spans 421–441; that stretch reads ESSTSNAETSSSGARPSGSDS. One can recognise a UBA domain in the interval 446–491; sequence AVKEKTVLSSSIEMVLSMGFSYAQAMEAYSIFGDDVDSMVCYVLET.

The protein belongs to the peptidase C85 family. In terms of assembly, interacts with KDM1C. In terms of tissue distribution, mostly expressed in stems flowers and siliques, and, to a lower extent, in leaves, roots and seedlings.

The protein resides in the nucleus. The protein localises to the cytoplasm. It carries out the reaction Thiol-dependent hydrolysis of ester, thioester, amide, peptide and isopeptide bonds formed by the C-terminal Gly of ubiquitin (a 76-residue protein attached to proteins as an intracellular targeting signal).. Its function is as follows. Hydrolase that can remove conjugated ubiquitin from proteins in vitro and may therefore play an important regulatory role at the level of protein turnover by preventing degradation. Binds chromatin (e.g. nucleosomes and histones) and has enzymatic histone deubiquitinase activity, specific for the H2B histone. Can both repress (e.g. OSR2) and promote (e.g. AN3) the expression of target genes by associating with chromatin, deubiquitinating H2B and regulating its euchromatic histone marks (e.g. H3ac and H3K4me). In association with LDL1/KDM1C, involved in transcriptional gene repression via histone deubiquitination and demethylation. Promotes the concerted epigenetic regulation and repression (e.g. the removal of euchromatic histone acetylation, ubiquitination, and methylation marks) of a set of genes (e.g. GA20OX, WUS, OSR2, ARL and ABI5) that collectively limit plant growth thus stimulating plant growth and increasing cell size. In Arabidopsis thaliana (Mouse-ear cress), this protein is OVARIAN TUMOR DOMAIN-containing deubiquitinating enzyme 6.